Consider the following 378-residue polypeptide: Glutamate 5-kinase (378 aa).

K20 is a binding site for ATP. The substrate site is built by S60, D147, and N159. Residues 179–180 (TD) and 221–227 (TGGMATK) each bind ATP. In terms of domain architecture, PUA spans 286–364 (AGDIVIDAGA…QEIYKVLGYE (79 aa)).

It belongs to the glutamate 5-kinase family.

The protein localises to the cytoplasm. It catalyses the reaction L-glutamate + ATP = L-glutamyl 5-phosphate + ADP. The protein operates within amino-acid biosynthesis; L-proline biosynthesis; L-glutamate 5-semialdehyde from L-glutamate: step 1/2. Catalyzes the transfer of a phosphate group to glutamate to form L-glutamate 5-phosphate. In Photobacterium profundum (strain SS9), this protein is Glutamate 5-kinase.